A 119-amino-acid polypeptide reads, in one-letter code: MORF4 family associated protein 1 like 2 (119 aa).

Basic and acidic residues predominate over residues Met1–Pro16. The interval Met1–Arg36 is disordered.

It belongs to the MORF4 family-associated protein family. May interact with CDK2AP1.

May play a role in cell proliferation. The sequence is that of MORF4 family associated protein 1 like 2 from Homo sapiens (Human).